A 22-amino-acid polypeptide reads, in one-letter code: Leptoglycin (22 aa).

The tract at residues 1–22 (GLLGGLLGPLLGGGGGGGGGLL) is disordered.

In terms of tissue distribution, expressed by the skin glands.

It is found in the secreted. Its function is as follows. Antimicrobial protein. Has antibacterial activity against the Gram-negative bacteria E.coli ATCC 28922 (MIC=50 uM), P.aeruginosa ATCC 9027 (MIC=8 uM) and C.freundii ATCC 8090 (MIC=75 uM). Does not have hemolytic activity. This is Leptoglycin from Leptodactylus pentadactylus (Smokey jungle frog).